Reading from the N-terminus, the 935-residue chain is Isoleucine--tRNA ligase (935 aa).

Positions 58–68 match the 'HIGH' region motif; that stretch reads PYANGSIHVGH. E558 serves as a coordination point for L-isoleucyl-5'-AMP. A 'KMSKS' region motif is present at residues 599-603; it reads KMSKS. An ATP-binding site is contributed by K602. Positions 897, 900, 917, and 920 each coordinate Zn(2+).

It belongs to the class-I aminoacyl-tRNA synthetase family. IleS type 1 subfamily. Monomer. Requires Zn(2+) as cofactor.

The protein localises to the cytoplasm. The catalysed reaction is tRNA(Ile) + L-isoleucine + ATP = L-isoleucyl-tRNA(Ile) + AMP + diphosphate. Functionally, catalyzes the attachment of isoleucine to tRNA(Ile). As IleRS can inadvertently accommodate and process structurally similar amino acids such as valine, to avoid such errors it has two additional distinct tRNA(Ile)-dependent editing activities. One activity is designated as 'pretransfer' editing and involves the hydrolysis of activated Val-AMP. The other activity is designated 'posttransfer' editing and involves deacylation of mischarged Val-tRNA(Ile). This chain is Isoleucine--tRNA ligase, found in Francisella tularensis subsp. holarctica (strain OSU18).